We begin with the raw amino-acid sequence, 297 residues long: Oxidoreductase R1 (297 aa).

The protein belongs to the asaB hydroxylase/desaturase family.

It participates in secondary metabolite biosynthesis. Its function is as follows. Oxidoreductase; part of the gene cluster that mediates the biosynthesis of squalestatin S1 (SQS1, also known as zaragozic acid A), a heavily oxidized fungal polyketide that offers potent cholesterol lowering activity by targeting squalene synthase (SS). SQS1 is composed of a 2,8-dioxobicyclic[3.2.1]octane-3,4,5-tricarboxyclic acid core that is connected to two lipophilic polyketide arms. These initial steps feature the priming of an unusual benzoic acid starter unit onto the highly reducing polyketide synthase pks2, followed by oxaloacetate extension and product release to generate a tricarboxylic acid containing product. The phenylalanine ammonia lyase (PAL) M7 and the acyl-CoA ligase M9 are involved in transforming phenylalanine into benzoyl-CoA. The citrate synthase-like protein R3 is involved in connecting the C-alpha-carbons of the hexaketide chain and oxaloacetate to afford the tricarboxylic acid unit. The potential hydrolytic enzymes, M8 and M10, are in close proximity to pks2 and may participate in product release. On the other side, the tetraketide arm is synthesized by a the squalestatin tetraketide synthase pks1 and enzymatically esterified to the core in the last biosynthetic step, by the acetyltransferase M4. The biosynthesis of the tetraketide must involve 3 rounds of chain extension. After the first and second rounds methyl-transfer occurs, and in all rounds of extension the ketoreductase and dehydratase are active. The enoyl reductase and C-MeT of pks1 are not active in the final round of extension. The acetyltransferase M4 appears to have a broad substrate selectivity for its acyl CoA substrate, allowing the in vitro synthesis of novel squalestatins. The biosynthesis of SQS1 requires several oxidative steps likely performed by oxidoreductases M1, R1 and R2. Finally, in support of the identification of the cluster as being responsible for SQS1 production, the cluster contains a gene encoding a putative squalene synthase (SS) R6, suggesting a likely mechanism for self-resistance. In Phoma sp. (strain ATCC 20986 / MF5453), this protein is Oxidoreductase R1.